The following is a 409-amino-acid chain: Probable tRNA N6-adenosine threonylcarbamoyltransferase, mitochondrial (409 aa).

A mitochondrion-targeting transit peptide spans 1–31; it reads MHALRNFAGNGIANVFGCGIRRRLSYVLGIE. Residues histidine 135 and histidine 139 each coordinate a divalent metal cation. Residues 159 to 163, aspartate 192, glycine 212, glutamate 216, 322 to 323, and serine 350 contribute to the substrate site; these read LASGG and NN. Aspartate 351 contacts a divalent metal cation.

Belongs to the KAE1 / TsaD family. In terms of assembly, homodimer. Requires a divalent metal cation as cofactor.

It is found in the mitochondrion. The enzyme catalyses L-threonylcarbamoyladenylate + adenosine(37) in tRNA = N(6)-L-threonylcarbamoyladenosine(37) in tRNA + AMP + H(+). In terms of biological role, required for the formation of a threonylcarbamoyl group on adenosine at position 37 (t(6)A37) in mitochondrial tRNAs that read codons beginning with adenine. Probably involved in the transfer of the threonylcarbamoyl moiety of threonylcarbamoyl-AMP (TC-AMP) to the N6 group of A37. Involved in mitochondrial genome maintenance. In Drosophila melanogaster (Fruit fly), this protein is Probable tRNA N6-adenosine threonylcarbamoyltransferase, mitochondrial.